We begin with the raw amino-acid sequence, 233 residues long: Chalcone--flavanone isomerase (233 aa).

Substrate is bound by residues T47, N113, and S192.

This sequence belongs to the chalcone isomerase family.

It catalyses the reaction a chalcone = a flavanone.. It participates in secondary metabolite biosynthesis; flavonoid biosynthesis. In terms of biological role, catalyzes the intramolecular cyclization of bicyclic chalcones into tricyclic (S)-flavanones. Responsible for the isomerization of 4,2',4',6'-tetrahydroxychalcone (also termed chalcone) into naringenin. In Oryza sativa subsp. japonica (Rice), this protein is Chalcone--flavanone isomerase (CHI).